The sequence spans 358 residues: Peptide chain release factor 1 (358 aa).

Glutamine 235 is modified (N5-methylglutamine).

Belongs to the prokaryotic/mitochondrial release factor family. Post-translationally, methylated by PrmC. Methylation increases the termination efficiency of RF1.

It is found in the cytoplasm. In terms of biological role, peptide chain release factor 1 directs the termination of translation in response to the peptide chain termination codons UAG and UAA. The chain is Peptide chain release factor 1 from Neisseria meningitidis serogroup B (strain ATCC BAA-335 / MC58).